A 727-amino-acid chain; its full sequence is Polyribonucleotide nucleotidyltransferase (727 aa).

Mg(2+) contacts are provided by D488 and D494. One can recognise a KH domain in the interval P555–I614. The region spanning G624–K692 is the S1 motif domain. A disordered region spans residues M691 to Q727. Positions P707 to G720 are enriched in basic and acidic residues.

This sequence belongs to the polyribonucleotide nucleotidyltransferase family. It depends on Mg(2+) as a cofactor.

The protein resides in the cytoplasm. The catalysed reaction is RNA(n+1) + phosphate = RNA(n) + a ribonucleoside 5'-diphosphate. In terms of biological role, involved in mRNA degradation. Catalyzes the phosphorolysis of single-stranded polyribonucleotides processively in the 3'- to 5'-direction. This chain is Polyribonucleotide nucleotidyltransferase, found in Acidovorax ebreus (strain TPSY) (Diaphorobacter sp. (strain TPSY)).